Reading from the N-terminus, the 667-residue chain is E3 ubiquitin-protein ligase Midline-1 (667 aa).

The RING-type zinc finger occupies 10-60 (CPICLELFEDPLLLPCAHSLCFNCAHRILVSHCATNESVESITAFQCPTCR). Serine 92 and serine 96 each carry phosphoserine. B box-type zinc fingers lie at residues 116–165 (KVLC…IEPI) and 172–212 (GLMC…VAAL). Cysteine 119, cysteine 122, cysteine 134, cysteine 137, cysteine 142, cysteine 145, histidine 150, histidine 159, cysteine 175, histidine 178, cysteine 198, and histidine 204 together coordinate Zn(2+). A coiled-coil region spans residues 205 to 264 (RDHQVAALSERYDKLKQNLESNLTNLIKRNTELETLLAKLIQTCQHVEVNASRQEAKLTE). One can recognise a COS domain in the interval 320-379 (LKENDHARFLQTAKNITERVSMATASSQVLIPEINLNDTFDTFALDFSREKKLLECLDYL). The Fibronectin type-III domain maps to 381 to 484 (APNPPTIREE…EPGKLKTNSQ (104 aa)). The segment covering 471 to 485 (SRSSEPGKLKTNSQP) has biased composition (polar residues). Residues 471–524 (SRSSEPGKLKTNSQPFKLDPKSAHRKLKVSHDNLTVERDESSSKKSHTPERFTS) are disordered. The B30.2/SPRY domain occupies 482–659 (NSQPFKLDPK…IITGLPIPDH (178 aa)). Positions 499-520 (VSHDNLTVERDESSSKKSHTPE) are enriched in basic and acidic residues. At serine 511 the chain carries Phosphoserine.

It belongs to the TRIM/RBCC family. Homodimer or heterodimer with MID2. Interacts with IGBP1. Interacts with TRIM16. In terms of processing, phosphorylated on serine and threonine residues. In terms of tissue distribution, in the fetus, highest expression found in kidney, followed by brain and lung. Expressed at low levels in fetal liver. In the adult, most abundant in heart, placenta and brain.

It localises to the cytoplasm. The protein resides in the cytoskeleton. It is found in the spindle. The catalysed reaction is S-ubiquitinyl-[E2 ubiquitin-conjugating enzyme]-L-cysteine + [acceptor protein]-L-lysine = [E2 ubiquitin-conjugating enzyme]-L-cysteine + N(6)-ubiquitinyl-[acceptor protein]-L-lysine.. Its function is as follows. Has E3 ubiquitin ligase activity towards IGBP1, promoting its monoubiquitination, which results in deprotection of the catalytic subunit of protein phosphatase PP2A, and its subsequent degradation by polyubiquitination. This Homo sapiens (Human) protein is E3 ubiquitin-protein ligase Midline-1 (MID1).